The sequence spans 388 residues: Succinate--CoA ligase [ADP-forming] subunit beta (388 aa).

The region spanning 9–244 (KAIFRSMGVA…LEEEDPKEIE (236 aa)) is the ATP-grasp domain. ATP-binding positions include lysine 46, 53 to 55 (GRG), glutamate 99, cysteine 102, and glutamate 107. Residues asparagine 199 and aspartate 213 each contribute to the Mg(2+) site. Residues asparagine 264 and 321 to 323 (GIM) contribute to the substrate site.

The protein belongs to the succinate/malate CoA ligase beta subunit family. In terms of assembly, heterotetramer of two alpha and two beta subunits. Mg(2+) is required as a cofactor.

It catalyses the reaction succinate + ATP + CoA = succinyl-CoA + ADP + phosphate. It carries out the reaction GTP + succinate + CoA = succinyl-CoA + GDP + phosphate. The protein operates within carbohydrate metabolism; tricarboxylic acid cycle; succinate from succinyl-CoA (ligase route): step 1/1. In terms of biological role, succinyl-CoA synthetase functions in the citric acid cycle (TCA), coupling the hydrolysis of succinyl-CoA to the synthesis of either ATP or GTP and thus represents the only step of substrate-level phosphorylation in the TCA. The beta subunit provides nucleotide specificity of the enzyme and binds the substrate succinate, while the binding sites for coenzyme A and phosphate are found in the alpha subunit. The polypeptide is Succinate--CoA ligase [ADP-forming] subunit beta (Staphylococcus saprophyticus subsp. saprophyticus (strain ATCC 15305 / DSM 20229 / NCIMB 8711 / NCTC 7292 / S-41)).